Here is a 151-residue protein sequence, read N- to C-terminus: Deoxyuridine 5'-triphosphate nucleotidohydrolase (151 aa).

Substrate-binding positions include 70–72, Asn83, 87–89, and Met97; these read RSG and LID.

The protein belongs to the dUTPase family. The cofactor is Mg(2+).

It catalyses the reaction dUTP + H2O = dUMP + diphosphate + H(+). Its pathway is pyrimidine metabolism; dUMP biosynthesis; dUMP from dCTP (dUTP route): step 2/2. Its function is as follows. This enzyme is involved in nucleotide metabolism: it produces dUMP, the immediate precursor of thymidine nucleotides and it decreases the intracellular concentration of dUTP so that uracil cannot be incorporated into DNA. This Yersinia pseudotuberculosis serotype O:1b (strain IP 31758) protein is Deoxyuridine 5'-triphosphate nucleotidohydrolase.